We begin with the raw amino-acid sequence, 429 residues long: Asparagine--tRNA ligase (429 aa).

The protein belongs to the class-II aminoacyl-tRNA synthetase family. Homodimer.

Its subcellular location is the cytoplasm. It catalyses the reaction tRNA(Asn) + L-asparagine + ATP = L-asparaginyl-tRNA(Asn) + AMP + diphosphate + H(+). In Desulforamulus reducens (strain ATCC BAA-1160 / DSM 100696 / MI-1) (Desulfotomaculum reducens), this protein is Asparagine--tRNA ligase.